The chain runs to 348 residues: Protein RecA (348 aa).

Residue 65 to 72 (GPESSGKT) coordinates ATP.

It belongs to the RecA family.

The protein resides in the cytoplasm. Its function is as follows. Can catalyze the hydrolysis of ATP in the presence of single-stranded DNA, the ATP-dependent uptake of single-stranded DNA by duplex DNA, and the ATP-dependent hybridization of homologous single-stranded DNAs. It interacts with LexA causing its activation and leading to its autocatalytic cleavage. This is Protein RecA from Enterococcus faecalis (strain ATCC 700802 / V583).